Consider the following 390-residue polypeptide: uncharacterized protein (390 aa).

This is an uncharacterized protein from Archaeoglobus fulgidus (strain ATCC 49558 / DSM 4304 / JCM 9628 / NBRC 100126 / VC-16).